Here is a 161-residue protein sequence, read N- to C-terminus: Large ribosomal subunit protein uL15 (161 aa).

A disordered region spans residues 1–43; the sequence is MKLSDIADNAGARKKRMRVGRGIGSGKGKTSGRGGKGQTARSG. Residues 21-37 show a composition bias toward gly residues; it reads RGIGSGKGKTSGRGGKG.

The protein belongs to the universal ribosomal protein uL15 family. In terms of assembly, part of the 50S ribosomal subunit.

Its function is as follows. Binds to the 23S rRNA. This Bradyrhizobium sp. (strain ORS 278) protein is Large ribosomal subunit protein uL15.